The primary structure comprises 61 residues: GTVYVFLLLLAFGIFTDISNACSEQMDDEDSYEVEKRGNACIEVCLQHTGNPAECDKPCDK.

An N-terminal signal peptide occupies residues Gly1 to Ala21. The propeptide occupies Cys22–Glu35. 2 cysteine pairs are disulfide-bonded: Cys41/Cys59 and Cys45/Cys55.

The protein belongs to the short scorpion toxin superfamily. Potassium channel inhibitor kappa-KTx family. Kappa-KTx 2 subfamily. In terms of tissue distribution, expressed by the venom gland.

It localises to the secreted. In terms of biological role, voltage-gated potassium channel inhibitor (Kv) that acts on Kv1.3/KCNA3 and Kv7.1/KCNQ1. 1 uM of the toxin inhibits Kv1.3/KCNA3 currents by 35.1%, whereas 10 uM of the toxin inhibits Kv7.1/KCNQ1 currents by 44.9%. This Heterometrus petersii (Asian forest scorpion) protein is Potassium channel toxin kappa-KTx 2.8.